A 1183-amino-acid polypeptide reads, in one-letter code: DNA-directed RNA polymerase subunit beta (1183 aa).

It belongs to the RNA polymerase beta chain family. In terms of assembly, the RNAP catalytic core consists of 2 alpha, 1 beta, 1 beta' and 1 omega subunit. When a sigma factor is associated with the core the holoenzyme is formed, which can initiate transcription.

It catalyses the reaction RNA(n) + a ribonucleoside 5'-triphosphate = RNA(n+1) + diphosphate. In terms of biological role, DNA-dependent RNA polymerase catalyzes the transcription of DNA into RNA using the four ribonucleoside triphosphates as substrates. The polypeptide is DNA-directed RNA polymerase subunit beta (Staphylococcus aureus (strain COL)).